A 418-amino-acid polypeptide reads, in one-letter code: Cyclin-A1 (418 aa).

This sequence belongs to the cyclin family. Cyclin AB subfamily. As to quaternary structure, interacts with the CDK1 and the CDK2 protein kinases to form a serine/threonine kinase holoenzyme complex. The cyclin subunit imparts substrate specificity to the complex.

The protein resides in the nucleus. In terms of biological role, may be involved in the control of the cell cycle at the G1/S (start) and G2/M (mitosis) transitions. This Xenopus laevis (African clawed frog) protein is Cyclin-A1 (ccna1).